Here is a 190-residue protein sequence, read N- to C-terminus: Xanthine phosphoribosyltransferase (190 aa).

Leu-20 and Asn-27 together coordinate xanthine. 128–132 (ANGQA) contacts 5-phospho-alpha-D-ribose 1-diphosphate. Residue Lys-156 coordinates xanthine.

The protein belongs to the purine/pyrimidine phosphoribosyltransferase family. Xpt subfamily. In terms of assembly, homodimer.

It is found in the cytoplasm. The catalysed reaction is XMP + diphosphate = xanthine + 5-phospho-alpha-D-ribose 1-diphosphate. It participates in purine metabolism; XMP biosynthesis via salvage pathway; XMP from xanthine: step 1/1. In terms of biological role, converts the preformed base xanthine, a product of nucleic acid breakdown, to xanthosine 5'-monophosphate (XMP), so it can be reused for RNA or DNA synthesis. This Pediococcus pentosaceus (strain ATCC 25745 / CCUG 21536 / LMG 10740 / 183-1w) protein is Xanthine phosphoribosyltransferase.